The sequence spans 238 residues: Hydroxyacylglutathione hydrolase (238 aa).

Zn(2+)-binding residues include His-52, His-54, Asp-56, His-57, His-108, Asp-125, and His-163.

This sequence belongs to the metallo-beta-lactamase superfamily. Glyoxalase II family. As to quaternary structure, monomer. Zn(2+) is required as a cofactor.

It carries out the reaction an S-(2-hydroxyacyl)glutathione + H2O = a 2-hydroxy carboxylate + glutathione + H(+). The protein operates within secondary metabolite metabolism; methylglyoxal degradation; (R)-lactate from methylglyoxal: step 2/2. Its function is as follows. Thiolesterase that catalyzes the hydrolysis of S-D-lactoyl-glutathione to form glutathione and D-lactic acid. This Haemophilus influenzae (strain ATCC 51907 / DSM 11121 / KW20 / Rd) protein is Hydroxyacylglutathione hydrolase.